The primary structure comprises 259 residues: MKQYTVKEIEALLPELEGESDPRWEMLRRDERKSVQALLARFVKQKEREKAARQRWEELMRYERELYAAGIERIAGIDEAGRGPLAGPVVAAAVILPKDAYLPGLDDSKRLTPAKREALFAQIEECAVAIGVGIVSAAEIDEWNIYEATKQAMAKAVAALSPSPEHLLVDAMTVPCALPQQRLIKGDANSASIAAASIIAKVTRDRWMHELDRRYPQYGFARHMGYGTPEHLAAIRRYGVTDEHRRSFAPVREALGVQS.

The RNase H type-2 domain occupies 72–259; it reads ERIAGIDEAG…PVREALGVQS (188 aa). Aspartate 78, glutamate 79, and aspartate 170 together coordinate a divalent metal cation.

The protein belongs to the RNase HII family. The cofactor is Mn(2+). Mg(2+) is required as a cofactor.

It localises to the cytoplasm. It carries out the reaction Endonucleolytic cleavage to 5'-phosphomonoester.. Its function is as follows. Endonuclease that specifically degrades the RNA of RNA-DNA hybrids. In Geobacillus thermodenitrificans (strain NG80-2), this protein is Ribonuclease HII.